The sequence spans 128 residues: Large ribosomal subunit protein bL12 (128 aa).

Belongs to the bacterial ribosomal protein bL12 family. As to quaternary structure, homodimer. Part of the ribosomal stalk of the 50S ribosomal subunit. Forms a multimeric L10(L12)X complex, where L10 forms an elongated spine to which 2 to 4 L12 dimers bind in a sequential fashion. Binds GTP-bound translation factors.

In terms of biological role, forms part of the ribosomal stalk which helps the ribosome interact with GTP-bound translation factors. Is thus essential for accurate translation. The chain is Large ribosomal subunit protein bL12 from Trichormus variabilis (strain ATCC 29413 / PCC 7937) (Anabaena variabilis).